A 248-amino-acid polypeptide reads, in one-letter code: 3-deoxy-manno-octulosonate cytidylyltransferase (248 aa).

It belongs to the KdsB family.

It is found in the cytoplasm. It catalyses the reaction 3-deoxy-alpha-D-manno-oct-2-ulosonate + CTP = CMP-3-deoxy-beta-D-manno-octulosonate + diphosphate. Its pathway is nucleotide-sugar biosynthesis; CMP-3-deoxy-D-manno-octulosonate biosynthesis; CMP-3-deoxy-D-manno-octulosonate from 3-deoxy-D-manno-octulosonate and CTP: step 1/1. It participates in bacterial outer membrane biogenesis; lipopolysaccharide biosynthesis. Functionally, activates KDO (a required 8-carbon sugar) for incorporation into bacterial lipopolysaccharide in Gram-negative bacteria. This is 3-deoxy-manno-octulosonate cytidylyltransferase from Photobacterium profundum (strain SS9).